Consider the following 1004-residue polypeptide: UPF0182 protein Noca_1530 (1004 aa).

Residues 1–20 (MSELFDEAPRDPGPPARSGS) form a disordered region. 7 helical membrane-spanning segments follow: residues 26 to 46 (LIVT…FAGI), 71 to 91 (VLFF…IYLA), 120 to 140 (TWLL…SAIG), 183 to 203 (MAVL…YGGI), 212 to 232 (LSGA…LAKA), 261 to 281 (VLPA…LFFV), and 293 to 313 (VGLA…PGIV). Disordered stretches follow at residues 899 to 924 (GVST…PPAT) and 974 to 1004 (LGQK…SPSS). Composition is skewed to low complexity over residues 903–916 (GPGT…QPGD) and 979–1004 (GSAG…SPSS).

This sequence belongs to the UPF0182 family.

The protein resides in the cell membrane. The chain is UPF0182 protein Noca_1530 from Nocardioides sp. (strain ATCC BAA-499 / JS614).